We begin with the raw amino-acid sequence, 728 residues long: Rho-related BTB domain-containing protein 2 (728 aa).

The rho-like stretch occupies residues 1-210; the sequence is MDSDMDYERP…DNAIRAALIS (210 aa). GTP contacts are provided by residues 21–28, 84–88, and 140–143; these read GDNAVGKT, DTFGD, and CQLD. BTB domains follow at residues 266–333 and 500–567; these read ADVI…HHHH and SDVT…TSSP. A compositionally biased stretch (gly residues) spans 304–313; the sequence is ELGGPSGSGG. The interval 304-333 is disordered; sequence ELGGPSGSGGPRPEDHRSHPEQHHHHHHHH. The span at 315–324 shows a compositional bias: basic and acidic residues; sequence RPEDHRSHPE. Positions 703–728 are disordered; it reads FWNSPSSPSSSAAGSASPSSSSSAVV. A compositionally biased stretch (low complexity) spans 706-728; sequence SPSSPSSSAAGSASPSSSSSAVV.

This sequence belongs to the small GTPase superfamily. Rho family. In terms of assembly, interacts with HSP90AA1 and HSP90AB1. Forms a complex with CUL3 and RBX1. Interacts (via BTB 1 domain) with CUL3. Interacts with MSI2. Autoubiquitinated by RHOBTB2-CUL3-RBX1 ubiquitin ligase complex. As to expression, expressed in most tissues, with highest expression in brain.

In terms of biological role, regulator of cell proliferation and apoptosis. It likely functions as a substrate-adapter that recruits key substrates, e.g. MSI2, to CUL3-based ubiquitin ligase complexes for degradation. Required for MSI2 ubiquitination and degradation. The chain is Rho-related BTB domain-containing protein 2 (Rhobtb2) from Mus musculus (Mouse).